Here is a 209-residue protein sequence, read N- to C-terminus: Orotate phosphoribosyltransferase (209 aa).

5-phospho-alpha-D-ribose 1-diphosphate-binding positions include Arg-96, Lys-100, His-102, and 122-130 (EDLISTGGS). Ser-126 is an orotate binding site.

The protein belongs to the purine/pyrimidine phosphoribosyltransferase family. PyrE subfamily. As to quaternary structure, homodimer. Mg(2+) is required as a cofactor.

The catalysed reaction is orotidine 5'-phosphate + diphosphate = orotate + 5-phospho-alpha-D-ribose 1-diphosphate. The protein operates within pyrimidine metabolism; UMP biosynthesis via de novo pathway; UMP from orotate: step 1/2. Its function is as follows. Catalyzes the transfer of a ribosyl phosphate group from 5-phosphoribose 1-diphosphate to orotate, leading to the formation of orotidine monophosphate (OMP). In Streptococcus sanguinis (strain SK36), this protein is Orotate phosphoribosyltransferase.